The chain runs to 564 residues: Dihydropyrimidinase-related protein 5 (564 aa).

2 positions are modified to phosphothreonine: Thr-509 and Thr-514. 2 positions are modified to phosphoserine: Ser-532 and Ser-538. Omega-N-methylarginine is present on Arg-559.

This sequence belongs to the metallo-dependent hydrolases superfamily. Hydantoinase/dihydropyrimidinase family. In terms of assembly, homotetramer, and heterotetramer with other DPYS-like proteins. Interacts with DPYSL2, DPYSL3 and DPYSL4. Interacts with SEPTIN4 isoform 4. Interacts with MAP2 and TUBB3. In terms of tissue distribution, detected in brain.

Its subcellular location is the cytoplasm. Involved in the negative regulation of dendrite outgrowth. This is Dihydropyrimidinase-related protein 5 (Dpysl5) from Mus musculus (Mouse).